A 257-amino-acid chain; its full sequence is Ig delta chain C region secreted form (257 aa).

The Ig-like 1 domain maps to 5–105; sequence PDMFLLSECK…WDSQSSKRVT (101 aa). A disulfide bond links Cys26 and Cys78. Residues Asn58 and Asn75 are each glycosylated (N-linked (GlcNAc...) asparagine). A disordered region spans residues 89 to 111; it reads PFKFPESWDSQSSKRVTPTLQAK. Positions 96–111 are enriched in polar residues; sequence WDSQSSKRVTPTLQAK. N-linked (GlcNAc...) asparagine glycans are attached at residues Asn112, Asn135, and Asn227. An Ig-like 2 domain is found at 133-233; that stretch reads PSNLTVNILT…TKLNASKSLA (101 aa).

Cell lines producing IgD contain several mRNA species for Ig delta chains. In plasmacytomas, the secreted form is the major component, and the membrane-bound form is a minor component. In spleen, however, the membrane-bound form is the major component. These two forms differ in their C-terminal segments.

The protein resides in the secreted. This is Ig delta chain C region secreted form from Mus musculus (Mouse).